Here is a 310-residue protein sequence, read N- to C-terminus: 4-diphosphocytidyl-2-C-methyl-D-erythritol kinase (310 aa).

Residue K10 is part of the active site. 102–112 (PVAGGMAGGSA) contributes to the ATP binding site. D144 is a catalytic residue. Residues 289-310 (TRTARGPAAGAQLLPGPVGSFA) form a disordered region.

It belongs to the GHMP kinase family. IspE subfamily.

The catalysed reaction is 4-CDP-2-C-methyl-D-erythritol + ATP = 4-CDP-2-C-methyl-D-erythritol 2-phosphate + ADP + H(+). Its pathway is isoprenoid biosynthesis; isopentenyl diphosphate biosynthesis via DXP pathway; isopentenyl diphosphate from 1-deoxy-D-xylulose 5-phosphate: step 3/6. Functionally, catalyzes the phosphorylation of the position 2 hydroxy group of 4-diphosphocytidyl-2C-methyl-D-erythritol. The sequence is that of 4-diphosphocytidyl-2-C-methyl-D-erythritol kinase from Cutibacterium acnes (strain DSM 16379 / KPA171202) (Propionibacterium acnes).